Reading from the N-terminus, the 102-residue chain is Large ribosomal subunit protein eL30 (102 aa).

The protein belongs to the eukaryotic ribosomal protein eL30 family. As to quaternary structure, part of the 50S ribosomal subunit.

In Thermococcus kodakarensis (strain ATCC BAA-918 / JCM 12380 / KOD1) (Pyrococcus kodakaraensis (strain KOD1)), this protein is Large ribosomal subunit protein eL30.